The primary structure comprises 218 residues: Mediator of RNA polymerase II transcription subunit 20 (218 aa).

It belongs to the Mediator complex subunit 20 family. In terms of assembly, component of the Mediator complex.

The protein resides in the nucleus. Its function is as follows. Component of the Mediator complex, a coactivator involved in the regulated transcription of nearly all RNA polymerase II-dependent genes. Mediator functions as a bridge to convey information from gene-specific regulatory proteins to the basal RNA polymerase II transcription machinery. Mediator is recruited to promoters by direct interactions with regulatory proteins and serves as a scaffold for the assembly of a functional preinitiation complex with RNA polymerase II and the general transcription factors. This is Mediator of RNA polymerase II transcription subunit 20 (SRB2) from Yarrowia lipolytica (strain CLIB 122 / E 150) (Yeast).